The following is a 384-amino-acid chain: Decapping nuclease RAI1 (384 aa).

A divalent metal cation is bound at residue Glu-168. Residue Glu-217 participates in substrate binding. A divalent metal cation-binding residues include Asp-219, Glu-237, and Leu-238. Lys-239 and Gln-263 together coordinate substrate.

This sequence belongs to the DXO/Dom3Z family. As to quaternary structure, interacts with RAT1; the interaction is direct, stabilizes RAT1 protein structure and stimulates its exoribonuclease activity. The interaction also stimulates RAI1 pyrophosphohydrolase activity, probably by recruiting it to mRNA substrates. A divalent metal cation serves as cofactor.

It is found in the nucleus. It catalyses the reaction a 5'-end NAD(+)-phospho-ribonucleoside in mRNA + H2O = a 5'-end phospho-ribonucleoside in mRNA + NAD(+) + H(+). The enzyme catalyses a 5'-end (N(7)-methyl 5'-triphosphoguanosine)-ribonucleoside-ribonucleotide in mRNA + H2O = a (N(7)-methyl 5'-triphosphoguanosine)-nucleoside + a 5'-end phospho-ribonucleoside in mRNA + H(+). The catalysed reaction is a 5'-end triphospho-ribonucleoside in mRNA + H2O = a 5'-end phospho-ribonucleoside in mRNA + diphosphate + H(+). Decapping enzyme for NAD-capped RNAs: specifically hydrolyzes the nicotinamide adenine dinucleotide (NAD) cap from a subset of RNAs by removing the entire NAD moiety from the 5'-end of an NAD-capped RNA. The NAD-cap is present at the 5'-end of some RNAs and snoRNAs. In contrast to the canonical 5'-end N7 methylguanosine (m7G) cap, the NAD cap promotes mRNA decay. Also acts as a non-canonical decapping enzyme that removes the entire cap structure of m7G capped or incompletely capped RNAs. Has decapping activity toward incomplete 5'-end m7G cap mRNAs such as unmethylated 5'-end-capped RNA (cap0), while it has no activity toward 2'-O-ribose methylated m7G cap (cap1). Also possesses RNA 5'-pyrophosphohydrolase activity by hydrolyzing the 5'-end triphosphate to release pyrophosphates. Stimulates exoribonuclease activity of Rat1, allowing it to degrade RNAs with stable secondary structure more effectively. This chain is Decapping nuclease RAI1 (RAI1), found in Kluyveromyces lactis (strain ATCC 8585 / CBS 2359 / DSM 70799 / NBRC 1267 / NRRL Y-1140 / WM37) (Yeast).